The chain runs to 181 residues: 28 kDa heat- and acid-stable phosphoprotein (181 aa).

The span at methionine 1–alanine 14 shows a compositional bias: basic residues. Residues methionine 1–lysine 117 are disordered. Threonine 18 bears the Phosphothreonine mark. Serine 19 bears the Phosphoserine mark. Over residues glutamate 30–aspartate 59 the composition is skewed to basic and acidic residues. Lysine 52 is covalently cross-linked (Glycyl lysine isopeptide (Lys-Gly) (interchain with G-Cter in SUMO2)). Residues serine 57, serine 60, and serine 63 each carry the phosphoserine modification. Positions serine 60–aspartate 69 are enriched in acidic residues. Tyrosine 70 is subject to Phosphotyrosine. Positions aspartate 102 to lysine 117 are enriched in basic and acidic residues. N6-methyllysine is present on lysine 126. Lysine 132 and lysine 164 each carry N6-acetyllysine. Residues glutamate 151–alanine 167 are compositionally biased toward basic and acidic residues. The tract at residues glutamate 151 to lysine 181 is disordered. A phosphoserine mark is found at serine 176 and serine 178.

The protein belongs to the PDAP1 family.

Enhances PDGFA-stimulated cell growth in fibroblasts, but inhibits the mitogenic effect of PDGFB. In Homo sapiens (Human), this protein is 28 kDa heat- and acid-stable phosphoprotein (PDAP1).